The following is a 413-amino-acid chain: Argininosuccinate synthase (413 aa).

22 to 30 (AYSGGLDTS) lines the ATP pocket. 2 residues coordinate L-citrulline: Tyr-100 and Ser-105. Residue Gly-130 participates in ATP binding. L-aspartate is bound by residues Thr-132, Asn-136, and Asp-137. Asn-136 contributes to the L-citrulline binding site. Residues Arg-140, Ser-189, Ser-198, Glu-274, and Tyr-286 each coordinate L-citrulline.

The protein belongs to the argininosuccinate synthase family. Type 1 subfamily. As to quaternary structure, homotetramer.

It localises to the cytoplasm. The enzyme catalyses L-citrulline + L-aspartate + ATP = 2-(N(omega)-L-arginino)succinate + AMP + diphosphate + H(+). It participates in amino-acid biosynthesis; L-arginine biosynthesis; L-arginine from L-ornithine and carbamoyl phosphate: step 2/3. This Endomicrobium trichonymphae protein is Argininosuccinate synthase.